The primary structure comprises 753 residues: Eukaryotic translation initiation factor 3 subunit B (753 aa).

The RRM domain occupies 42–129 (TMLVVDNIPI…NVLHVNRFGD (88 aa)). WD repeat units follow at residues 142-185 (DLPS…WWNG), 203-241 (NSKW…GPIG), 321-362 (DTQS…LLDR), 537-580 (LDSK…DERR), and 595-640 (GEHY…LLHE). Residues 723–753 (KSKAKIDVKGQEARVEEWVEELIDETEELSM) are a coiled coil.

Belongs to the eIF-3 subunit B family. In terms of assembly, component of the eukaryotic translation initiation factor 3 (eIF-3) complex.

It localises to the cytoplasm. Functionally, RNA-binding component of the eukaryotic translation initiation factor 3 (eIF-3) complex, which is involved in protein synthesis of a specialized repertoire of mRNAs and, together with other initiation factors, stimulates binding of mRNA and methionyl-tRNAi to the 40S ribosome. The eIF-3 complex specifically targets and initiates translation of a subset of mRNAs involved in cell proliferation. The sequence is that of Eukaryotic translation initiation factor 3 subunit B from Cryptococcus neoformans var. neoformans serotype D (strain B-3501A) (Filobasidiella neoformans).